The sequence spans 138 residues: Putative pre-16S rRNA nuclease (138 aa).

Belongs to the YqgF nuclease family.

The protein localises to the cytoplasm. Its function is as follows. Could be a nuclease involved in processing of the 5'-end of pre-16S rRNA. This Listeria monocytogenes serovar 1/2a (strain ATCC BAA-679 / EGD-e) protein is Putative pre-16S rRNA nuclease.